We begin with the raw amino-acid sequence, 337 residues long: Nodulation protein D 2 (337 aa).

Residues 6–63 form the HTH lysR-type domain; that stretch reads LDLNLLVVLDSLMTARNLTAAARSINLSQPAMSAAVARLRAYFGDELFTMRGRTLVPT. Positions 23 to 42 form a DNA-binding region, H-T-H motif; that stretch reads LTAAARSINLSQPAMSAAVA.

It belongs to the LysR transcriptional regulatory family.

Its function is as follows. NodD regulates the expression of the nodABCFE genes which encode other nodulation proteins. NodD is also a negative regulator of its own expression. Binds flavonoids as inducers. The chain is Nodulation protein D 2 (nodD2) from Bradyrhizobium sp. (strain NC92).